We begin with the raw amino-acid sequence, 140 residues long: MNQRLQRLGDQIQRELAVLIRDDVNDPRLTGFVTISSVKVSSDLGYADVYVTIMEPELNDAMSKHSHEESLKVLNKAAGFLRTELSHSLKTRTTPRLRFHYDEVTARGNYMMDLINKAVTKTEQTSADDDADRLDSEDRS.

The segment at 121–140 is disordered; sequence KTEQTSADDDADRLDSEDRS.

It belongs to the RbfA family. Monomer. Binds 30S ribosomal subunits, but not 50S ribosomal subunits or 70S ribosomes.

It is found in the cytoplasm. Its function is as follows. One of several proteins that assist in the late maturation steps of the functional core of the 30S ribosomal subunit. Associates with free 30S ribosomal subunits (but not with 30S subunits that are part of 70S ribosomes or polysomes). Required for efficient processing of 16S rRNA. May interact with the 5'-terminal helix region of 16S rRNA. This is Ribosome-binding factor A from Psychrobacter sp. (strain PRwf-1).